Consider the following 60-residue polypeptide: Large ribosomal subunit protein uL30 (60 aa).

It belongs to the universal ribosomal protein uL30 family. Part of the 50S ribosomal subunit.

This Limosilactobacillus fermentum (strain NBRC 3956 / LMG 18251) (Lactobacillus fermentum) protein is Large ribosomal subunit protein uL30.